Consider the following 101-residue polypeptide: Small ribosomal subunit protein uS10 (101 aa).

The protein belongs to the universal ribosomal protein uS10 family. In terms of assembly, part of the 30S ribosomal subunit.

Functionally, involved in the binding of tRNA to the ribosomes. This Corynebacterium jeikeium (strain K411) protein is Small ribosomal subunit protein uS10.